Here is a 427-residue protein sequence, read N- to C-terminus: Glutamate-1-semialdehyde 2,1-aminomutase (427 aa).

The residue at position 265 (K265) is an N6-(pyridoxal phosphate)lysine.

The protein belongs to the class-III pyridoxal-phosphate-dependent aminotransferase family. HemL subfamily. Homodimer. Pyridoxal 5'-phosphate is required as a cofactor.

The protein localises to the cytoplasm. It catalyses the reaction (S)-4-amino-5-oxopentanoate = 5-aminolevulinate. The protein operates within porphyrin-containing compound metabolism; protoporphyrin-IX biosynthesis; 5-aminolevulinate from L-glutamyl-tRNA(Glu): step 2/2. The protein is Glutamate-1-semialdehyde 2,1-aminomutase of Stutzerimonas stutzeri (strain A1501) (Pseudomonas stutzeri).